The following is a 473-amino-acid chain: Protein translocase subunit SecA (473 aa).

D127 contacts ATP. The disordered stretch occupies residues 424–447 (VAEGKAVHQDTSKQEPKKKQPIRK). 4 residues coordinate Zn(2+): C457, C459, C468, and C469.

Belongs to the SecA family. In terms of assembly, monomer and homodimer. Part of the essential Sec protein translocation apparatus which comprises SecA, SecYEG and auxiliary proteins SecDF. Other proteins may also be involved. The cofactor is Zn(2+).

Its subcellular location is the cell membrane. The protein resides in the cytoplasm. The enzyme catalyses ATP + H2O + cellular proteinSide 1 = ADP + phosphate + cellular proteinSide 2.. Functionally, part of the Sec protein translocase complex. Interacts with the SecYEG preprotein conducting channel. Has a central role in coupling the hydrolysis of ATP to the transfer of proteins into and across the cell membrane, serving as an ATP-driven molecular motor driving the stepwise translocation of polypeptide chains across the membrane. This is Protein translocase subunit SecA from Cytobacillus firmus (Bacillus firmus).